The chain runs to 153 residues: Transcriptional repressor NrdR (153 aa).

The segment at Cys3–Cys34 is a zinc-finger region. The 91-residue stretch at Phe49 to Asp139 folds into the ATP-cone domain.

Belongs to the NrdR family. Requires Zn(2+) as cofactor.

In terms of biological role, negatively regulates transcription of bacterial ribonucleotide reductase nrd genes and operons by binding to NrdR-boxes. This chain is Transcriptional repressor NrdR, found in Ehrlichia chaffeensis (strain ATCC CRL-10679 / Arkansas).